The sequence spans 207 residues: Urease accessory protein UreG (207 aa).

12–19 (GPVGAGKT) serves as a coordination point for GTP.

The protein belongs to the SIMIBI class G3E GTPase family. UreG subfamily. Homodimer. UreD, UreF and UreG form a complex that acts as a GTP-hydrolysis-dependent molecular chaperone, activating the urease apoprotein by helping to assemble the nickel containing metallocenter of UreC. The UreE protein probably delivers the nickel.

The protein localises to the cytoplasm. Facilitates the functional incorporation of the urease nickel metallocenter. This process requires GTP hydrolysis, probably effectuated by UreG. The polypeptide is Urease accessory protein UreG (Cereibacter sphaeroides (strain ATCC 17025 / ATH 2.4.3) (Rhodobacter sphaeroides)).